We begin with the raw amino-acid sequence, 133 residues long: Transcription antitermination protein NusB (133 aa).

This sequence belongs to the NusB family.

Involved in transcription antitermination. Required for transcription of ribosomal RNA (rRNA) genes. Binds specifically to the boxA antiterminator sequence of the ribosomal RNA (rrn) operons. The protein is Transcription antitermination protein NusB of Clostridium botulinum (strain Alaska E43 / Type E3).